We begin with the raw amino-acid sequence, 474 residues long: MTNIEQERWSRVKGRLRTTVGEDVYSSWFARMDLESVQQESVHLSVPTRFLKSWIQTHYSERVLSCWQAEMPEVHRIDLTVRTAMRCAAPAKEQAAPIEPRREDNRAAAHDLRVSATAPVSANHEALGGSPLDPRLTFSSFVVGRSNTLAHAAAKQVAEGRRGDPVMFNPLYIHSGVGLGKTHLLQAVTWAGNSGLERKVLYLTAEKFMYGFVAALKSQTALAFKEALRGIDVLVIDDLQFLQGKTTQAEFCHTLNALIDAGRQVVIAADRPPSDLESLDERVRSRLAGGLVVEMASLGEELRLGILKSRVTAARAHHASFEVPLPVLEYLAHSITHNGRDLEGAINRLLAHSKLNAQPVTLEMAEREVRDLIRPQEPKRIKIEDIQRVVARQYNVSRSDLLSSRRTANVVRPRQVAMYLAKTLTLRSLPEIGRRFGGRDHTTVLHAVRKIEGLVSKDAALSDEVESLKRQLQE.

The domain I, interacts with DnaA modulators stretch occupies residues 1–73 (MTNIEQERWS…LSCWQAEMPE (73 aa)). Residues 73–130 (EVHRIDLTVRTAMRCAAPAKEQAAPIEPRREDNRAAAHDLRVSATAPVSANHEALGGS) form a domain II region. A domain III, AAA+ region region spans residues 131–353 (PLDPRLTFSS…GAINRLLAHS (223 aa)). 4 residues coordinate ATP: glycine 178, glycine 180, lysine 181, and threonine 182. The interval 354–474 (KLNAQPVTLE…VESLKRQLQE (121 aa)) is domain IV, binds dsDNA.

This sequence belongs to the DnaA family. Oligomerizes as a right-handed, spiral filament on DNA at oriC.

It is found in the cytoplasm. In terms of biological role, plays an essential role in the initiation and regulation of chromosomal replication. ATP-DnaA binds to the origin of replication (oriC) to initiate formation of the DNA replication initiation complex once per cell cycle. Binds the DnaA box (a 9 base pair repeat at the origin) and separates the double-stranded (ds)DNA. Forms a right-handed helical filament on oriC DNA; dsDNA binds to the exterior of the filament while single-stranded (ss)DNA is stabiized in the filament's interior. The ATP-DnaA-oriC complex binds and stabilizes one strand of the AT-rich DNA unwinding element (DUE), permitting loading of DNA polymerase. After initiation quickly degrades to an ADP-DnaA complex that is not apt for DNA replication. Binds acidic phospholipids. The polypeptide is Chromosomal replication initiator protein DnaA (Rhodopseudomonas palustris (strain BisA53)).